Reading from the N-terminus, the 524-residue chain is Cytochrome P450 monooxygenase oblB (524 aa).

3 helical membrane passes run 18–38 (ILNA…GLVI), 225–245 (FHSG…IHLI), and 322–342 (VLIG…VYYI). Cys-466 lines the heme pocket.

Belongs to the cytochrome P450 family. Heme is required as a cofactor.

It localises to the membrane. It catalyses the reaction ophiobolin F + 4 reduced [NADPH--hemoprotein reductase] + 4 O2 = ophiobolin C + 4 oxidized [NADPH--hemoprotein reductase] + 6 H2O + 4 H(+). It functions in the pathway secondary metabolite biosynthesis; terpenoid biosynthesis. Functionally, cytochrome P450 monooxygenase; part of the gene cluster that mediates the biosynthesis of the sesterterpenes ophiobolins, fungal phytotoxins with potential anti-cancer activities. The first step of the pathway is performed by the sesterterpene synthase oblA that possesses both prenyl transferase and terpene cyclase activity, converting isopentenyl diphosphate and dimethylallyl diphosphate into geranylfarnesyl diphosphate (GFPP) and further converting GFPP into ophiobolin F, respectively. Other sesterterpenoids (C(25) terpenoids) are found as minor products of oblA. The cytochrome P450 monooxygenase oblB then catalyzes a four-step oxidative transformation of ophiobolin F to yield ophiobolin C. The FAD-dependent oxidoreductase oblC might be involved in a later oxidation step that produces ophiobolin A. This is Cytochrome P450 monooxygenase oblB from Cochliobolus heterostrophus (strain C5 / ATCC 48332 / race O) (Southern corn leaf blight fungus).